A 348-amino-acid chain; its full sequence is MSKQTLVLLYGGRSAEREVSVLSAESVMRAVNYDKFLVKTYFITQMGQFIKTQQFSEKPSESERLMTNETIELTQKIKPSDIYEEGAVVFPVLHGPMGEDGSIQGFLEVLRMPYIGTNVMSSSIAMDKITTKRVLESIGIPQVAYTVYIDGQDLEACLVETLARLTFPIFVKPANMGSSVGISKAQTKVELRKAIQLALTYDSRVLIEQGVIAREIEVGLLGNDKVKSTLPGEVIKDVDFYDYQAKYVDNKITMAIPADVDQSIVTEMRSYAEVAFKALGGCGLSRCDFFLTQDGQVYLNELNTMPGFTQWSMYPLLWENMGLAYPDLIEELVTLAQEIFDQRESHLI.

Positions 132–334 (KRVLESIGIP…YPDLIEELVT (203 aa)) constitute an ATP-grasp domain. ATP is bound at residue 162 to 217 (LARLTFPIFVKPANMGSSVGISKAQTKVELRKAIQLALTYDSRVLIEQGVIAREIE). The Mg(2+) site is built by Asp288, Glu301, and Asn303.

The protein belongs to the D-alanine--D-alanine ligase family. Requires Mg(2+) as cofactor. It depends on Mn(2+) as a cofactor.

Its subcellular location is the cytoplasm. The catalysed reaction is 2 D-alanine + ATP = D-alanyl-D-alanine + ADP + phosphate + H(+). It participates in cell wall biogenesis; peptidoglycan biosynthesis. Functionally, cell wall formation. The sequence is that of D-alanine--D-alanine ligase from Streptococcus pyogenes serotype M4 (strain MGAS10750).